We begin with the raw amino-acid sequence, 70 residues long: Putative membrane protein insertion efficiency factor (70 aa).

This sequence belongs to the UPF0161 family.

It is found in the cell membrane. Its function is as follows. Could be involved in insertion of integral membrane proteins into the membrane. This chain is Putative membrane protein insertion efficiency factor, found in Finegoldia magna (strain ATCC 29328 / DSM 20472 / WAL 2508) (Peptostreptococcus magnus).